We begin with the raw amino-acid sequence, 34 residues long: Cytochrome c oxidase subunit 6B (34 aa).

This sequence belongs to the cytochrome c oxidase subunit 6B family. Component of the cytochrome c oxidase (complex IV, CIV), a multisubunit enzyme composed of 14 subunits. The complex is composed of a catalytic core of 3 subunits MT-CO1, MT-CO2 and MT-CO3, encoded in the mitochondrial DNA, and 11 supernumerary subunits COX4I, COX5A, COX5B, COX6A, COX6B, COX6C, COX7A, COX7B, COX7C, COX8 and NDUFA4, which are encoded in the nuclear genome. The complex exists as a monomer or a dimer and forms supercomplexes (SCs) in the inner mitochondrial membrane with NADH-ubiquinone oxidoreductase (complex I, CI) and ubiquinol-cytochrome c oxidoreductase (cytochrome b-c1 complex, complex III, CIII), resulting in different assemblies (supercomplex SCI(1)III(2)IV(1) and megacomplex MCI(2)III(2)IV(2)). In terms of processing, the N-terminus is blocked.

It localises to the mitochondrion inner membrane. It participates in energy metabolism; oxidative phosphorylation. Its function is as follows. Component of the cytochrome c oxidase, the last enzyme in the mitochondrial electron transport chain which drives oxidative phosphorylation. The respiratory chain contains 3 multisubunit complexes succinate dehydrogenase (complex II, CII), ubiquinol-cytochrome c oxidoreductase (cytochrome b-c1 complex, complex III, CIII) and cytochrome c oxidase (complex IV, CIV), that cooperate to transfer electrons derived from NADH and succinate to molecular oxygen, creating an electrochemical gradient over the inner membrane that drives transmembrane transport and the ATP synthase. Cytochrome c oxidase is the component of the respiratory chain that catalyzes the reduction of oxygen to water. Electrons originating from reduced cytochrome c in the intermembrane space (IMS) are transferred via the dinuclear copper A center (CU(A)) of subunit 2 and heme A of subunit 1 to the active site in subunit 1, a binuclear center (BNC) formed by heme A3 and copper B (CU(B)). The BNC reduces molecular oxygen to 2 water molecules using 4 electrons from cytochrome c in the IMS and 4 protons from the mitochondrial matrix. This chain is Cytochrome c oxidase subunit 6B, found in Thunnus obesus (Bigeye tuna).